The chain runs to 374 residues: Isocitrate dehydrogenase [NAD] catalytic subunit 5, mitochondrial (374 aa).

The N-terminal 44 residues, 1 to 44 (MTMAANLARRLIGNRSTQILGAVNSSSGAASSVARAFCSSTTPI), are a transit peptide targeting the mitochondrion. 4 residues coordinate substrate: arginine 127, arginine 137, arginine 158, and aspartate 245. Residues aspartate 245, aspartate 269, and aspartate 273 each coordinate Mg(2+).

The protein belongs to the isocitrate and isopropylmalate dehydrogenases family. Heterooligomer of catalytic and regulatory subunits. The cofactor is Mg(2+). It depends on Mn(2+) as a cofactor. Ubiquitous.

It localises to the mitochondrion. The enzyme catalyses D-threo-isocitrate + NAD(+) = 2-oxoglutarate + CO2 + NADH. Its function is as follows. Performs an essential role in the oxidative function of the citric acid cycle. This Arabidopsis thaliana (Mouse-ear cress) protein is Isocitrate dehydrogenase [NAD] catalytic subunit 5, mitochondrial (IDH5).